A 227-amino-acid chain; its full sequence is UPF0173 metal-dependent hydrolase BCAH187_A4741 (227 aa).

This sequence belongs to the UPF0173 family.

The chain is UPF0173 metal-dependent hydrolase BCAH187_A4741 from Bacillus cereus (strain AH187).